Consider the following 117-residue polypeptide: Prefoldin subunit beta (117 aa).

Belongs to the prefoldin subunit beta family. Heterohexamer of two alpha and four beta subunits.

Its subcellular location is the cytoplasm. Its function is as follows. Molecular chaperone capable of stabilizing a range of proteins. Seems to fulfill an ATP-independent, HSP70-like function in archaeal de novo protein folding. The chain is Prefoldin subunit beta from Methanosarcina barkeri (strain Fusaro / DSM 804).